Consider the following 243-residue polypeptide: Adenylate dimethylallyltransferase (243 aa).

It belongs to the isopentenyl transferase family.

It catalyses the reaction dimethylallyl diphosphate + AMP = N(6)-(dimethylallyl)adenosine 5'-phosphate + diphosphate. Functionally, transfers dimethylallyl groups to AMP as part of the biosynthesis of cytokinin phytohormones. In Rhizobium rhizogenes (Agrobacterium rhizogenes), this protein is Adenylate dimethylallyltransferase (tzs).